The primary structure comprises 387 residues: 26S proteasome regulatory subunit 6B homolog (387 aa).

ATP is bound at residue 175–182 (GPPGTGKT).

This sequence belongs to the AAA ATPase family. In terms of assembly, the 26S proteasome consists of a 20S proteasome core and two 19S regulatory subunits. The 20S proteasome core is composed of 28 subunits that are arranged in four stacked rings, resulting in a barrel-shaped structure. The two end rings are each formed by seven alpha subunits, and the two central rings are each formed by seven beta subunits. The catalytic chamber with the active sites is on the inside of the barrel.

The protein localises to the cytoplasm. It localises to the nucleus. Acts as a regulatory subunit of the 26S proteasome which degrades poly-ubiquitinated proteins in the cytoplasm and in the nucleus. It is essential for the regulated turnover of proteins and for the removal of misfolded proteins. The proteasome is a multicatalytic proteinase complex that is characterized by its ability to cleave peptides with Arg, Phe, Tyr, Leu, and Glu adjacent to the leaving group at neutral or slightly basic pH. The protein is 26S proteasome regulatory subunit 6B homolog of Encephalitozoon cuniculi (strain GB-M1) (Microsporidian parasite).